The chain runs to 480 residues: MKIVHVASELFPYVKTGGLADAVASLAGMLADSGHEVAVFLPGYRAALEHRDAAAAERRYRLKVEMGQQYLSGDVRVFSPRPNLSIFLICREEFFDRRAPYGNGERDYEDNSDRFIFFCKGVVETLRLADMQADVVHAHDWQAALLPLLLREAERRQGGMLAMKTIFTIHNIAFQGIFPRAVFARTNLPDELNSVDGLEYYEQINFMKAGILFADRVTTVSPRYAEEIQTPEFGCGLDGVVQTRESDLVGLLNGVDTKVWNPATDPLLPARYSRADLAGKRVCRAELLKRFGFAPDFDGPVFGMVCRLAEQKGVDLVLANQGFFLSQSCRLIVLGAGELRYETAMKALAARAPNKIALSAKLDEAMSHLIEAGSDFFLMPSLFEPCGLNQMYSQIYGTLPIVSRVGGLVDTVIDADQQPEKGTGLMCEPTSASLLDVLARAMTLFDDKPRYGTVQQRAMAREFGWNVAAAGYERLYRDTL.

Residue K15 participates in ADP-alpha-D-glucose binding.

Belongs to the glycosyltransferase 1 family. Bacterial/plant glycogen synthase subfamily.

It catalyses the reaction [(1-&gt;4)-alpha-D-glucosyl](n) + ADP-alpha-D-glucose = [(1-&gt;4)-alpha-D-glucosyl](n+1) + ADP + H(+). Its pathway is glycan biosynthesis; glycogen biosynthesis. Synthesizes alpha-1,4-glucan chains using ADP-glucose. This is Glycogen synthase from Opitutus terrae (strain DSM 11246 / JCM 15787 / PB90-1).